Reading from the N-terminus, the 451-residue chain is Trigger factor (451 aa).

The PPIase FKBP-type domain maps to 163-248 (GDIIDMEYTV…IKALYVNILP (86 aa)).

This sequence belongs to the FKBP-type PPIase family. Tig subfamily.

It localises to the cytoplasm. The enzyme catalyses [protein]-peptidylproline (omega=180) = [protein]-peptidylproline (omega=0). Involved in protein export. Acts as a chaperone by maintaining the newly synthesized protein in an open conformation. Functions as a peptidyl-prolyl cis-trans isomerase. This chain is Trigger factor, found in Leptospira borgpetersenii serovar Hardjo-bovis (strain JB197).